The sequence spans 423 residues: Adenylosuccinate synthetase (423 aa).

Residues 13 to 19 (GDEGKGK) and 41 to 43 (GHT) contribute to the GTP site. The active-site Proton acceptor is the aspartate 14. Residues aspartate 14 and glycine 41 each coordinate Mg(2+). Residues 14-17 (DEGK), 39-42 (NAGH), threonine 130, arginine 144, glutamine 223, threonine 238, and arginine 302 contribute to the IMP site. Histidine 42 functions as the Proton donor in the catalytic mechanism. 298–304 (SVTGRKR) lines the substrate pocket. Residues arginine 304 and 410–412 (SVG) contribute to the GTP site.

This sequence belongs to the adenylosuccinate synthetase family. In terms of assembly, homodimer. It depends on Mg(2+) as a cofactor.

The protein resides in the cytoplasm. It carries out the reaction IMP + L-aspartate + GTP = N(6)-(1,2-dicarboxyethyl)-AMP + GDP + phosphate + 2 H(+). The protein operates within purine metabolism; AMP biosynthesis via de novo pathway; AMP from IMP: step 1/2. Plays an important role in the de novo pathway of purine nucleotide biosynthesis. Catalyzes the first committed step in the biosynthesis of AMP from IMP. The polypeptide is Adenylosuccinate synthetase (Porphyromonas gingivalis (strain ATCC BAA-308 / W83)).